The chain runs to 98 residues: NADH-ubiquinone oxidoreductase chain 4L (98 aa).

A run of 3 helical transmembrane segments spans residues 1–21 (MTLI…GLLM), 29–49 (ALLC…LTIL), and 61–81 (IILL…LVMV).

This sequence belongs to the complex I subunit 4L family. Core subunit of respiratory chain NADH dehydrogenase (Complex I) which is composed of 45 different subunits.

It is found in the mitochondrion inner membrane. It carries out the reaction a ubiquinone + NADH + 5 H(+)(in) = a ubiquinol + NAD(+) + 4 H(+)(out). In terms of biological role, core subunit of the mitochondrial membrane respiratory chain NADH dehydrogenase (Complex I) which catalyzes electron transfer from NADH through the respiratory chain, using ubiquinone as an electron acceptor. Part of the enzyme membrane arm which is embedded in the lipid bilayer and involved in proton translocation. The protein is NADH-ubiquinone oxidoreductase chain 4L (MT-ND4L) of Balaenoptera omurai (Omura's baleen whale).